We begin with the raw amino-acid sequence, 227 residues long: Cytochrome c oxidase subunit 2 (227 aa).

At 1–14 (MAYPFQLGFQDATS) the chain is on the mitochondrial intermembrane side. The helical transmembrane segment at 15–45 (PIMEELLHFHDHTLMIVFLISSLVLYVISAM) threads the bilayer. At 46–59 (LTTNLTHTSTMDAQ) the chain is on the mitochondrial matrix side. A helical membrane pass occupies residues 60–87 (EVETIWTILPAIILITIALPSLRILYMM). Over 88-227 (DEINNPAMTI…YFEKWSVSML (140 aa)) the chain is Mitochondrial intermembrane. 6 residues coordinate Cu cation: His-161, Cys-196, Glu-198, Cys-200, His-204, and Met-207. Glu-198 serves as a coordination point for Mg(2+). Residue Tyr-218 is modified to Phosphotyrosine.

It belongs to the cytochrome c oxidase subunit 2 family. Component of the cytochrome c oxidase (complex IV, CIV), a multisubunit enzyme composed of 14 subunits. The complex is composed of a catalytic core of 3 subunits MT-CO1, MT-CO2 and MT-CO3, encoded in the mitochondrial DNA, and 11 supernumerary subunits COX4I, COX5A, COX5B, COX6A, COX6B, COX6C, COX7A, COX7B, COX7C, COX8 and NDUFA4, which are encoded in the nuclear genome. The complex exists as a monomer or a dimer and forms supercomplexes (SCs) in the inner mitochondrial membrane with NADH-ubiquinone oxidoreductase (complex I, CI) and ubiquinol-cytochrome c oxidoreductase (cytochrome b-c1 complex, complex III, CIII), resulting in different assemblies (supercomplex SCI(1)III(2)IV(1) and megacomplex MCI(2)III(2)IV(2)). Found in a complex with TMEM177, COA6, COX18, COX20, SCO1 and SCO2. Interacts with TMEM177 in a COX20-dependent manner. Interacts with COX20. Interacts with COX16. The cofactor is Cu cation.

The protein localises to the mitochondrion inner membrane. The enzyme catalyses 4 Fe(II)-[cytochrome c] + O2 + 8 H(+)(in) = 4 Fe(III)-[cytochrome c] + 2 H2O + 4 H(+)(out). Functionally, component of the cytochrome c oxidase, the last enzyme in the mitochondrial electron transport chain which drives oxidative phosphorylation. The respiratory chain contains 3 multisubunit complexes succinate dehydrogenase (complex II, CII), ubiquinol-cytochrome c oxidoreductase (cytochrome b-c1 complex, complex III, CIII) and cytochrome c oxidase (complex IV, CIV), that cooperate to transfer electrons derived from NADH and succinate to molecular oxygen, creating an electrochemical gradient over the inner membrane that drives transmembrane transport and the ATP synthase. Cytochrome c oxidase is the component of the respiratory chain that catalyzes the reduction of oxygen to water. Electrons originating from reduced cytochrome c in the intermembrane space (IMS) are transferred via the dinuclear copper A center (CU(A)) of subunit 2 and heme A of subunit 1 to the active site in subunit 1, a binuclear center (BNC) formed by heme A3 and copper B (CU(B)). The BNC reduces molecular oxygen to 2 water molecules using 4 electrons from cytochrome c in the IMS and 4 protons from the mitochondrial matrix. This Macrotus californicus (Californian leaf-nosed bat) protein is Cytochrome c oxidase subunit 2 (MT-CO2).